The primary structure comprises 453 residues: tRNA modification GTPase MnmE (453 aa).

3 residues coordinate (6S)-5-formyl-5,6,7,8-tetrahydrofolate: R22, E79, and K119. One can recognise a TrmE-type G domain in the interval 215-376; it reads GMKVVIAGRP…LKQHLKSLMG (162 aa). Position 225 (N225) interacts with K(+). Residues 225–230, 244–250, 269–272, and 334–337 each bind GTP; these read NAGKSS, TEIAGTT, DTAG, and NKAD. Mg(2+) is bound at residue S229. Positions 244, 246, and 249 each coordinate K(+). T250 serves as a coordination point for Mg(2+). K453 serves as a coordination point for (6S)-5-formyl-5,6,7,8-tetrahydrofolate.

This sequence belongs to the TRAFAC class TrmE-Era-EngA-EngB-Septin-like GTPase superfamily. TrmE GTPase family. In terms of assembly, homodimer. Heterotetramer of two MnmE and two MnmG subunits. It depends on K(+) as a cofactor.

Its subcellular location is the cytoplasm. Its function is as follows. Exhibits a very high intrinsic GTPase hydrolysis rate. Involved in the addition of a carboxymethylaminomethyl (cmnm) group at the wobble position (U34) of certain tRNAs, forming tRNA-cmnm(5)s(2)U34. In Shewanella halifaxensis (strain HAW-EB4), this protein is tRNA modification GTPase MnmE.